Reading from the N-terminus, the 1005-residue chain is Isoleucine--tRNA ligase (1005 aa).

The 'HIGH' region signature appears at 70–80; sequence PYANGNIHIGH. Residue glutamate 629 participates in L-isoleucyl-5'-AMP binding. A 'KMSKS' region motif is present at residues 670-674; the sequence is KMSKS. Position 673 (lysine 673) interacts with ATP.

Belongs to the class-I aminoacyl-tRNA synthetase family. IleS type 1 subfamily. As to quaternary structure, monomer.

Its subcellular location is the cytoplasm. It catalyses the reaction tRNA(Ile) + L-isoleucine + ATP = L-isoleucyl-tRNA(Ile) + AMP + diphosphate. Functionally, catalyzes the attachment of isoleucine to tRNA(Ile). As IleRS can inadvertently accommodate and process structurally similar amino acids such as valine, to avoid such errors it has two additional distinct tRNA(Ile)-dependent editing activities. One activity is designated as 'pretransfer' editing and involves the hydrolysis of activated Val-AMP. The other activity is designated 'posttransfer' editing and involves deacylation of mischarged Val-tRNA(Ile). In Rhodopseudomonas palustris (strain ATCC BAA-98 / CGA009), this protein is Isoleucine--tRNA ligase.